The primary structure comprises 186 residues: Ribonuclease M5 (186 aa).

One can recognise a Toprim domain in the interval 4 to 94 (KEIIVVEGRD…AKPKNKRGIG (91 aa)). Glu10, Asp56, and Asp58 together coordinate Mg(2+).

Belongs to the ribonuclease M5 family. As to quaternary structure, requires ribosomal protein L18 (rplR) for catalysis; it can be replaced by 30% dimethylsulfoxide suggesting L18 functions as an rRNA folding chaperone. Mg(2+) serves as cofactor. Requires Mn(2+) as cofactor. Ca(2+) is required as a cofactor.

It localises to the cytoplasm. The enzyme catalyses Endonucleolytic cleavage of RNA, removing 21 and 42 nucleotides, respectively, from the 5'- and 3'-termini of a 5S-rRNA precursor.. Its function is as follows. Required for correct processing of both the 5' and 3' ends of 5S rRNA precursor. Cleaves both sides of a double-stranded region yielding mature 5S rRNA in one step. Releases 5'-phosphoryl and 3'-hydroxy termini. This chain is Ribonuclease M5, found in Bacillus subtilis (strain 168).